We begin with the raw amino-acid sequence, 484 residues long: Chromosomal replication initiator protein DnaA (484 aa).

The tract at residues 1–73 is domain I, interacts with DnaA modulators; it reads MQEGKNIWSL…EILIEKGHST (73 aa). Positions 73–140 are domain II; the sequence is TINVEFIHSQ…EEIHIKYRNP (68 aa). The domain III, AAA+ region stretch occupies residues 141–357; sequence FLKKKYTFEN…AAVTKLKAHI (217 aa). ATP-binding residues include glycine 185, glycine 187, lysine 188, and threonine 189. Positions 358–484 are domain IV, binds dsDNA; sequence DLEDIEIDTN…IELMNKINKN (127 aa).

The protein belongs to the DnaA family. Oligomerizes as a right-handed, spiral filament on DNA at oriC.

The protein localises to the cytoplasm. Its function is as follows. Plays an essential role in the initiation and regulation of chromosomal replication. ATP-DnaA binds to the origin of replication (oriC) to initiate formation of the DNA replication initiation complex once per cell cycle. Binds the DnaA box (a 9 base pair repeat at the origin) and separates the double-stranded (ds)DNA. Forms a right-handed helical filament on oriC DNA; dsDNA binds to the exterior of the filament while single-stranded (ss)DNA is stabiized in the filament's interior. The ATP-DnaA-oriC complex binds and stabilizes one strand of the AT-rich DNA unwinding element (DUE), permitting loading of DNA polymerase. After initiation quickly degrades to an ADP-DnaA complex that is not apt for DNA replication. Binds acidic phospholipids. The chain is Chromosomal replication initiator protein DnaA from Borrelia recurrentis (strain A1).